Consider the following 848-residue polypeptide: Leucine--tRNA ligase (848 aa).

Positions 1–16 (MCPEQPHDTRAERDEM) are enriched in basic and acidic residues. Residues 1–30 (MCPEQPHDTRAERDEMSEQTQQAAQPAETA) form a disordered region. Over residues 18-30 (EQTQQAAQPAETA) the composition is skewed to low complexity. A 'HIGH' region motif is present at residues 69 to 79 (PYPSGDLHMGH). The short motif at 614-618 (KMSKS) is the 'KMSKS' region element. Lys-617 provides a ligand contact to ATP.

Belongs to the class-I aminoacyl-tRNA synthetase family.

It localises to the cytoplasm. It carries out the reaction tRNA(Leu) + L-leucine + ATP = L-leucyl-tRNA(Leu) + AMP + diphosphate. The polypeptide is Leucine--tRNA ligase (Nocardioides sp. (strain ATCC BAA-499 / JS614)).